Here is a 982-residue protein sequence, read N- to C-terminus: Serine/threonine-protein kinase SULU (982 aa).

The Protein kinase domain occupies 30–289 (YQDLREIGHG…AEECFRHPFI (260 aa)). ATP contacts are provided by residues 36-44 (IGHGSFGAV) and Lys59. Asp153 acts as the Proton acceptor in catalysis. 4 disordered regions span residues 331-484 (GKEG…PLDT), 592-620 (QNNE…QNQQ), 751-789 (LETQ…RDLK), and 957-982 (RTGS…QMAM). A compositionally biased stretch (low complexity) spans 353–373 (SIGRAGDSASSRSASLTSFRS). Residues 421 to 431 (QMLSSTSTSGV) show a composition bias toward polar residues. Residues 459–472 (IPTSQPTSKSESSS) show a composition bias toward low complexity. Basic and acidic residues predominate over residues 595 to 608 (ELDKRKKDIEDGEK). Polar residues predominate over residues 759–768 (SASQNEYTQR). A compositionally biased stretch (low complexity) spans 957 to 967 (RTGSTSRSSGG). Residues 973–982 (GNSSSIQMAM) are compositionally biased toward polar residues.

It belongs to the protein kinase superfamily. Ser/Thr protein kinase family. STE20 subfamily. Mg(2+) serves as cofactor. Expressed in the pharynx, including the pharyngeal muscle of the metacorpus, the isthmus, and the terminal bulb; in the intestine, including the pharyngeointestinal valve between the pharynx and the intestine, a structure near the anus likely to be the anal sphincter and the excretory cell and in several ring neurons.

Its subcellular location is the cytoplasm. The protein localises to the cytoskeleton. It localises to the cell cortex. The enzyme catalyses L-seryl-[protein] + ATP = O-phospho-L-seryl-[protein] + ADP + H(+). The catalysed reaction is L-threonyl-[protein] + ATP = O-phospho-L-threonyl-[protein] + ADP + H(+). Functionally, acts as a negative regulator of cortical contractions during early embryonic cell division, possibly by regulating rho-1-dependent actomyosin contractility. Plays a role in polarity establishment in early embryos by regulating the size of the anterior and posterior cortex in the first asymmetric cell division. Might play a role in cell cycle progression. In the germline, involved in the regulation of meiotic progression during oogenesis, possibly by modulating the timing of mpk-1 activation. Plays a role in meiotic recombination events. Involved in pharyngeal pumping. The protein is Serine/threonine-protein kinase SULU (kin-18) of Caenorhabditis elegans.